A 479-amino-acid chain; its full sequence is NAC domain-containing protein 45 (479 aa).

Residues 6–157 form the NAC domain; sequence LPPGFRFHPT…AYALCRVFKK (152 aa). Residues 105 to 163 mediate DNA binding; it reads IGTKKTLVYYRGRAPHGIRTGWVMHEYRLDETECEPSAYGMQDAYALCRVFKKIVIEAK.

As to expression, expressed in a few sieve element cells before enucleation and in phloem-pole pericycle cells.

The protein resides in the nucleus. Transcription factor directing sieve element enucleation and cytosol degradation. Not required for formation of lytic vacuoles. Regulates, with NAC086, the transcription of NEN1, NEN2, NEN3, NEN4, RTM1, RTM2, UBP16, PLDZETA, ABCB10 and At1g26450. In Arabidopsis thaliana (Mouse-ear cress), this protein is NAC domain-containing protein 45.